Here is a 166-residue protein sequence, read N- to C-terminus: Ribosome maturation factor RimP (166 aa).

It belongs to the RimP family.

The protein resides in the cytoplasm. Its function is as follows. Required for maturation of 30S ribosomal subunits. The protein is Ribosome maturation factor RimP of Psychrobacter arcticus (strain DSM 17307 / VKM B-2377 / 273-4).